The primary structure comprises 362 residues: MTTSTNNQTLTQVSNMTNHTLNSTEIYQLFEYTRLGVWLMCIVGTFLNVLVITTILYYRRKKKSPSDTYICNLAVADLLIVVGLPFFLEYAKHHPKLSREVVCSGLNACFYICLFAGVCFLINLSMDRYCVIVWGVELNRVRNNKRATCWVVIFWILAVLMGMPHYLMYSHTNNECVGEFANETSGWFPVFLNTKVNICGYLAPIALMAYTYNRMVRFIINYVGKWHMQTLHVLLVVVVSFASFWFPFNLALFLESIRLLAGVYNDTLQNVIIFCLYVGQFLAYVRACLNPGIYILVGTQMRKDMWTTLRVFACCCVKQEIPYQDIDIELQKDIQRRAKHTKRTHYDRKNAPMESGEEEFLL.

At Met1–Arg34 the chain is on the virion surface side. N-linked (GlcNAc...) asparagine; by host glycans are attached at residues Asn7, Asn15, Asn18, and Asn22. Residues Leu35–Tyr58 form a helical membrane-spanning segment. Over Arg59 to Asp67 the chain is Intravirion. Residues Thr68–Tyr90 form a helical membrane-spanning segment. Residues Ala91–Ser104 are Virion surface-facing. A helical membrane pass occupies residues Gly105–Met126. The Intravirion portion of the chain corresponds to Asp127–Thr148. The chain crosses the membrane as a helical span at residues Cys149–Leu167. The Virion surface portion of the chain corresponds to Met168 to Asn193. Residues Thr194 to Asn213 form a helical membrane-spanning segment. Residues Arg214–Val233 are Intravirion-facing. Residues Leu234–Ile257 traverse the membrane as a helical segment. The Virion surface portion of the chain corresponds to Arg258 to Phe274. A helical transmembrane segment spans residues Cys275–Gly298. Over Thr299–Leu362 the chain is Intravirion. The disordered stretch occupies residues Thr341–Leu362.

Belongs to the G-protein coupled receptor 1 family. In terms of assembly, heterodimer with US28. Interacts with host Gi alpha-1 subunit GNAI1; this interaction does not lead to the catalytic activation of Gi complex.

Its subcellular location is the virion. The protein resides in the host cell membrane. Functionally, interacts with the host Gi complex without activating it, thereby probably interfering with the chemokine-Gi signaling. May also function as a G protein sink to sequester G protein from the cell surface via internalization. Plays an important role in spread of HCMV via the extracellular route. In Homo sapiens (Human), this protein is G-protein coupled receptor homolog US27 (US27).